A 61-amino-acid polypeptide reads, in one-letter code: Large ribosomal subunit protein bL32 (61 aa).

The span at 1–19 (MAHPKRRQSKTRTAKRRTH) shows a compositional bias: basic residues. Positions 1–20 (MAHPKRRQSKTRTAKRRTHD) are disordered.

The protein belongs to the bacterial ribosomal protein bL32 family.

The sequence is that of Large ribosomal subunit protein bL32 from Bacteroides fragilis (strain YCH46).